Reading from the N-terminus, the 770-residue chain is Penicillin-binding protein 1C (770 aa).

Residues 1–8 (MPRLLTKR) are Cytoplasmic-facing. Residues 9 to 29 (GCWITLAAAPFLLFLAAWGAD) form a helical; Signal-anchor for type II membrane protein membrane-spanning segment. Topologically, residues 30–770 (KLWPLPLHEV…QIATVKFVMQ (741 aa)) are periplasmic. Residues 43–213 (RVVVAQDGTP…SRLRPDRWPE (171 aa)) form a transglycosylase region. Glu84 functions as the Proton donor; for transglycosylase activity in the catalytic mechanism. The interval 278-559 (AGLQRRLEEL…FASAVPLLNQ (282 aa)) is transpeptidase. Ser342 serves as the catalytic Acyl-ester intermediate; for transpeptidase activity.

This sequence in the N-terminal section; belongs to the glycosyltransferase 51 family. It in the C-terminal section; belongs to the transpeptidase family.

It localises to the cell inner membrane. It catalyses the reaction [GlcNAc-(1-&gt;4)-Mur2Ac(oyl-L-Ala-gamma-D-Glu-L-Lys-D-Ala-D-Ala)](n)-di-trans,octa-cis-undecaprenyl diphosphate + beta-D-GlcNAc-(1-&gt;4)-Mur2Ac(oyl-L-Ala-gamma-D-Glu-L-Lys-D-Ala-D-Ala)-di-trans,octa-cis-undecaprenyl diphosphate = [GlcNAc-(1-&gt;4)-Mur2Ac(oyl-L-Ala-gamma-D-Glu-L-Lys-D-Ala-D-Ala)](n+1)-di-trans,octa-cis-undecaprenyl diphosphate + di-trans,octa-cis-undecaprenyl diphosphate + H(+). Its pathway is cell wall biogenesis; peptidoglycan biosynthesis. With respect to regulation, transglycosylase activity can be inhibited by moenomycin. Functionally, cell wall formation. The enzyme has a penicillin-insensitive transglycosylase N-terminal domain (formation of linear glycan strands) and a transpeptidase C-terminal domain which may not be functional. The sequence is that of Penicillin-binding protein 1C (pbpC) from Escherichia coli (strain K12).